The following is an 85-amino-acid chain: F1845 adhesin operon regulatory protein (85 aa).

Functionally, regulates the transcription of genes involved in the biosynthesis of F1845 fimbrial adhesin. In Escherichia coli, this protein is F1845 adhesin operon regulatory protein (daaA).